Reading from the N-terminus, the 152-residue chain is Small ribosomal subunit protein uS8m (152 aa).

Belongs to the universal ribosomal protein uS8 family.

Its subcellular location is the mitochondrion. The polypeptide is Small ribosomal subunit protein uS8m (RPS8) (Marchantia polymorpha (Common liverwort)).